The primary structure comprises 539 residues: Phosphoenolpyruvate carboxykinase (ATP) (539 aa).

Substrate-binding residues include R61, Y195, and K201. ATP contacts are provided by residues K201, H220, and 238 to 246 (GLSGTGKTT). The Mn(2+) site is built by K201 and H220. Position 259 (D259) interacts with Mn(2+). The ATP site is built by E287, R325, and T450. R325 is a binding site for substrate.

This sequence belongs to the phosphoenolpyruvate carboxykinase (ATP) family. It depends on Mn(2+) as a cofactor.

It localises to the cytoplasm. It catalyses the reaction oxaloacetate + ATP = phosphoenolpyruvate + ADP + CO2. It participates in carbohydrate biosynthesis; gluconeogenesis. Its function is as follows. Involved in the gluconeogenesis. Catalyzes the conversion of oxaloacetate (OAA) to phosphoenolpyruvate (PEP) through direct phosphoryl transfer between the nucleoside triphosphate and OAA. The sequence is that of Phosphoenolpyruvate carboxykinase (ATP) from Methylorubrum extorquens (strain CM4 / NCIMB 13688) (Methylobacterium extorquens).